A 382-amino-acid chain; its full sequence is Chaperone protein DnaJ (382 aa).

Positions 5-70 constitute a J domain; the sequence is DYYEVLGVSR…DKKAAYDRYG (66 aa). The CR-type zinc finger occupies 141 to 219; that stretch reads GVQKTINVPA…CHGAGRVEKE (79 aa). Residues Cys154, Cys157, Cys171, Cys174, Cys193, Cys196, Cys207, and Cys210 each contribute to the Zn(2+) site. CXXCXGXG motif repeat units follow at residues 154-161, 171-178, 193-200, and 207-214; these read CDSCKGTG, CPTCSGMG, CPTCNGMG, and CKSCHGAG.

This sequence belongs to the DnaJ family. In terms of assembly, homodimer. The cofactor is Zn(2+).

The protein localises to the cytoplasm. In terms of biological role, participates actively in the response to hyperosmotic and heat shock by preventing the aggregation of stress-denatured proteins and by disaggregating proteins, also in an autonomous, DnaK-independent fashion. Unfolded proteins bind initially to DnaJ; upon interaction with the DnaJ-bound protein, DnaK hydrolyzes its bound ATP, resulting in the formation of a stable complex. GrpE releases ADP from DnaK; ATP binding to DnaK triggers the release of the substrate protein, thus completing the reaction cycle. Several rounds of ATP-dependent interactions between DnaJ, DnaK and GrpE are required for fully efficient folding. Also involved, together with DnaK and GrpE, in the DNA replication of plasmids through activation of initiation proteins. This chain is Chaperone protein DnaJ, found in Cereibacter sphaeroides (strain ATCC 17025 / ATH 2.4.3) (Rhodobacter sphaeroides).